We begin with the raw amino-acid sequence, 310 residues long: Ribonuclease Z (310 aa).

7 residues coordinate Zn(2+): His64, His66, Asp68, His69, His146, Asp215, and His273. The active-site Proton acceptor is Asp68.

Belongs to the RNase Z family. As to quaternary structure, homodimer. Zn(2+) serves as cofactor.

It catalyses the reaction Endonucleolytic cleavage of RNA, removing extra 3' nucleotides from tRNA precursor, generating 3' termini of tRNAs. A 3'-hydroxy group is left at the tRNA terminus and a 5'-phosphoryl group is left at the trailer molecule.. In terms of biological role, zinc phosphodiesterase, which displays some tRNA 3'-processing endonuclease activity. Probably involved in tRNA maturation, by removing a 3'-trailer from precursor tRNA. The sequence is that of Ribonuclease Z from Aeropyrum pernix (strain ATCC 700893 / DSM 11879 / JCM 9820 / NBRC 100138 / K1).